Reading from the N-terminus, the 2148-residue chain is Polyketide synthase 1 (2148 aa).

The segment at 19–261 is N-terminal acylcarrier protein transacylase domain (SAT); it reads FIFGDQSSCN…TPLAVHAPYH (243 aa). Residues 394 to 829 form the Ketosynthase family 3 (KS3) domain; that stretch reads ESKIAIIGMS…GGNTALLVED (436 aa). Residues C566, H701, and H745 each act as for beta-ketoacyl synthase activity in the active site. Residues 929–1233 form a malonyl-CoA:ACP transacylase (MAT) domain region; that stretch reads AFVFSGQGSQ…PSLMRNKDGW (305 aa). S1018 acts as the For acyl/malonyl transferase activity in catalysis. The tract at residues 1310-1624 is product template (PT) domain; it reads TASVHRIVHE…RKVLNTAMPP (315 aa). The tract at residues 1314-1447 is N-terminal hotdog fold; that stretch reads HRIVHESVDK…SSLHFEQPKV (134 aa). In terms of domain architecture, PKS/mFAS DH spans 1314–1619; sequence HRIVHESVDK…FQGIPRKVLN (306 aa). H1346 functions as the Proton acceptor; for dehydratase activity in the catalytic mechanism. The interval 1474-1619 is C-terminal hotdog fold; sequence LNSRMSSGVI…FQGIPRKVLN (146 aa). Catalysis depends on D1533, which acts as the Proton donor; for dehydratase activity. The disordered stretch occupies residues 1619–1657; that stretch reads NTAMPPPKSQNEAPVRSAPAKPAAKPPKSASSEHSGHFA. Residues 1635 to 1650 show a composition bias toward low complexity; it reads SAPAKPAAKPPKSASS. A Carrier 1 domain is found at 1678–1752; sequence RNPMLAVFKI…DLATHLGLDT (75 aa). S1712 carries the post-translational modification O-(pantetheine 4'-phosphoryl)serine. The segment covering 1755-1790 has biased composition (low complexity); the sequence is SDQSSGQSSSSGGLSPRSDSIGEITSSATTPPSLSP. The interval 1755–1796 is disordered; sequence SDQSSGQSSSSGGLSPRSDSIGEITSSATTPPSLSPRGSVSG. The Carrier 2 domain maps to 1793–1870; it reads SVSGSQCKDV…SFKHMFQQGH (78 aa). The residue at position 1830 (S1830) is an O-(pantetheine 4'-phosphoryl)serine. A thioesterase (TE) domain region spans residues 1882 to 2146; that stretch reads LKQYRATSTL…ERVAAFIRST (265 aa). Catalysis depends on S1973, which acts as the For thioesterase activity.

In terms of biological role, polyketide synthase; part of the Pks1 gene cluster that mediates the biosynthesis of an anthraquinone derivative pigment that contributes to conidial pigmentation that provides protection from UV radiation, heat and cold stress. The polyketide synthase Pks1 produces 1-acetyl-2,4,6,8-tetrahydroxy-9,10-anthraquinone though condensation of acetyl-CoA with malonyl-CoA. The dehydratase EthD and the laccase Mlac1 further convert the anthraquinone derivative into the final conidial pigment. The protein is Polyketide synthase 1 of Metarhizium guizhouense (strain ARSEF 977).